Reading from the N-terminus, the 660-residue chain is Acetyl-coenzyme A synthetase (660 aa).

Residues 197–200 and T317 contribute to the CoA site; that span reads RGGK. ATP is bound by residues 397 to 399, 421 to 426, D512, and R528; these read GEP and DTFWQT. CoA is bound at residue S536. R539 serves as a coordination point for ATP. 2 residues coordinate Mg(2+): V550 and V555. N6-acetyllysine is present on K625.

The protein belongs to the ATP-dependent AMP-binding enzyme family. It depends on Mg(2+) as a cofactor. In terms of processing, acetylated. Deacetylation by the SIR2-homolog deacetylase activates the enzyme.

The enzyme catalyses acetate + ATP + CoA = acetyl-CoA + AMP + diphosphate. Its pathway is ketone degradation; acetoin degradation. Its function is as follows. Catalyzes the conversion of acetate into acetyl-CoA (AcCoA), an essential intermediate at the junction of anabolic and catabolic pathways. AcsA undergoes a two-step reaction. In the first half reaction, AcsA combines acetate with ATP to form acetyl-adenylate (AcAMP) intermediate. In the second half reaction, it can then transfer the acetyl group from AcAMP to the sulfhydryl group of CoA, forming the product AcCoA. Although acetate is the preferred substrate of AcsA, propionate is also used, but at a diminished rate compared with that of acetate. Fatty acids with more than three carbon atoms are usually not accepted as substrates by AcsA. In Cupriavidus necator (strain ATCC 17699 / DSM 428 / KCTC 22496 / NCIMB 10442 / H16 / Stanier 337) (Ralstonia eutropha), this protein is Acetyl-coenzyme A synthetase.